The following is a 426-amino-acid chain: MHDIEHIRKNPKGFEKAIKSRGVKEFTAKEILEIDHKKRSLTTKLQALNKQRNEVTEEIKRLKMNKSPCEEQVKLSKSITSEIETISLKEQTEKNKLVDILSNLPNISAQNVPIGEDESSNVEIRKYGKKRKFDFTPKFHYELGERLGLMDFEQAAKISGSRFTILKGQLAKLGRALINFMLETHVNEFAYTEVYHPALVKNEAMYNVGQLPKFSDDSYLTTDKLRLIPTSEVVLTNLVADKIIEEKELPIRFTAYSECFRKEAGSAGRDTRGMIRQHQFGKVELVSITTEDQSKDELERMTNAAEEILKKLELPYRIMLLCSGDMGFAAQKTYDIEVWLPEQNKYREISSCSNCGTFQARRMNTKYFLETDRKTKKYVHTLNGSALAIGRTIVAIMENYQNSDGSVTIPNVLQRYMSNDTVISKQ.

230–232 (TSE) contributes to the L-serine binding site. 261–263 (RKE) serves as a coordination point for ATP. E284 contacts L-serine. 348–351 (EISS) serves as a coordination point for ATP. S385 is an L-serine binding site.

Belongs to the class-II aminoacyl-tRNA synthetase family. Type-1 seryl-tRNA synthetase subfamily. In terms of assembly, homodimer. The tRNA molecule binds across the dimer.

It is found in the cytoplasm. It catalyses the reaction tRNA(Ser) + L-serine + ATP = L-seryl-tRNA(Ser) + AMP + diphosphate + H(+). It carries out the reaction tRNA(Sec) + L-serine + ATP = L-seryl-tRNA(Sec) + AMP + diphosphate + H(+). Its pathway is aminoacyl-tRNA biosynthesis; selenocysteinyl-tRNA(Sec) biosynthesis; L-seryl-tRNA(Sec) from L-serine and tRNA(Sec): step 1/1. Functionally, catalyzes the attachment of serine to tRNA(Ser). Is also able to aminoacylate tRNA(Sec) with serine, to form the misacylated tRNA L-seryl-tRNA(Sec), which will be further converted into selenocysteinyl-tRNA(Sec). The sequence is that of Serine--tRNA ligase from Wolbachia pipientis subsp. Culex pipiens (strain wPip).